Here is a 73-residue protein sequence, read N- to C-terminus: Translation initiation factor IF-1 (73 aa).

The S1-like domain maps to 1–72; the sequence is MAKQDVIEME…TKGRITYRLR (72 aa).

The protein belongs to the IF-1 family. Component of the 30S ribosomal translation pre-initiation complex which assembles on the 30S ribosome in the order IF-2 and IF-3, IF-1 and N-formylmethionyl-tRNA(fMet); mRNA recruitment can occur at any time during PIC assembly.

It localises to the cytoplasm. One of the essential components for the initiation of protein synthesis. Stabilizes the binding of IF-2 and IF-3 on the 30S subunit to which N-formylmethionyl-tRNA(fMet) subsequently binds. Helps modulate mRNA selection, yielding the 30S pre-initiation complex (PIC). Upon addition of the 50S ribosomal subunit IF-1, IF-2 and IF-3 are released leaving the mature 70S translation initiation complex. The sequence is that of Translation initiation factor IF-1 from Gloeobacter violaceus (strain ATCC 29082 / PCC 7421).